Here is a 117-residue protein sequence, read N- to C-terminus: Ribonuclease P protein component (117 aa).

This sequence belongs to the RnpA family. Consists of a catalytic RNA component (M1 or rnpB) and a protein subunit.

It catalyses the reaction Endonucleolytic cleavage of RNA, removing 5'-extranucleotides from tRNA precursor.. Its function is as follows. RNaseP catalyzes the removal of the 5'-leader sequence from pre-tRNA to produce the mature 5'-terminus. It can also cleave other RNA substrates such as 4.5S RNA. The protein component plays an auxiliary but essential role in vivo by binding to the 5'-leader sequence and broadening the substrate specificity of the ribozyme. This chain is Ribonuclease P protein component, found in Lactococcus lactis subsp. lactis (strain IL1403) (Streptococcus lactis).